The sequence spans 119 residues: Large ribosomal subunit protein uL24 (119 aa).

The protein belongs to the universal ribosomal protein uL24 family. As to quaternary structure, part of the 50S ribosomal subunit.

In terms of biological role, one of two assembly initiator proteins, it binds directly to the 5'-end of the 23S rRNA, where it nucleates assembly of the 50S subunit. Functionally, located at the polypeptide exit tunnel on the outside of the subunit. The polypeptide is Large ribosomal subunit protein uL24 (Methanococcus vannielii).